A 324-amino-acid chain; its full sequence is Probable nicotianamine synthase 4 (324 aa).

The protein belongs to the nicotianamine synthase (NAS)-like family.

It catalyses the reaction 3 S-adenosyl-L-methionine = nicotianamine + 3 S-methyl-5'-thioadenosine + 3 H(+). Synthesizes nicotianamine, a polyamine which serves as a sensor for the physiological iron status within the plant, and/or might be involved in the transport of iron. The chain is Probable nicotianamine synthase 4 (NAS4) from Arabidopsis thaliana (Mouse-ear cress).